A 455-amino-acid polypeptide reads, in one-letter code: Maintenance of telomere capping protein 1 (455 aa).

Disordered regions lie at residues 1-113 and 296-317; these read MAET…SATP and AKKMNKENKQENVGAGDDEDAS. The span at 27 to 38 shows a compositional bias: basic and acidic residues; the sequence is PTSKEFNNDDSK. The span at 80 to 113 shows a compositional bias: polar residues; that stretch reads VAATSNERQQHDASNQPSQAAQTTINKNTESATP. Residues 296-305 show a composition bias toward basic and acidic residues; that stretch reads AKKMNKENKQ.

The protein belongs to the MTC1 family.

The protein resides in the cytoplasm. Its function is as follows. Involved in telomere capping. The chain is Maintenance of telomere capping protein 1 from Schizosaccharomyces pombe (strain 972 / ATCC 24843) (Fission yeast).